Reading from the N-terminus, the 386-residue chain is Patatin-14 (386 aa).

Positions 1–23 are cleaved as a signal peptide; it reads MATTKSFLILFFMILATTSSTCA. The region spanning 32–229 is the PNPLA domain; the sequence is LSIDGGGIKG…TVGDPALLSL (198 aa). A GXGXXG motif is present at residues 36-41; sequence GGGIKG. Positions 75 to 79 match the GXSXG motif; sequence GTSTG. Ser77 acts as the Nucleophile in catalysis. Asn115 is a glycosylation site (N-linked (GlcNAc...) asparagine). Asp215 serves as the catalytic Proton acceptor. A DGA/G motif is present at residues 215–217; the sequence is DGG. Residues 321–381 are a coiled coil; the sequence is ENALTGTTTE…LLSDRKKLRA (61 aa).

It belongs to the patatin family. In terms of tissue distribution, tuber.

The protein localises to the vacuole. In terms of biological role, probable lipolytic acyl hydrolase (LAH), an activity which is thought to be involved in the response of tubers to pathogens. The sequence is that of Patatin-14 from Solanum tuberosum (Potato).